A 392-amino-acid chain; its full sequence is DNA-directed RNA polymerase subunit Rpo1C (392 aa).

The protein belongs to the RNA polymerase beta' chain family. As to quaternary structure, part of the RNA polymerase complex.

Its subcellular location is the cytoplasm. It catalyses the reaction RNA(n) + a ribonucleoside 5'-triphosphate = RNA(n+1) + diphosphate. Its function is as follows. DNA-dependent RNA polymerase (RNAP) catalyzes the transcription of DNA into RNA using the four ribonucleoside triphosphates as substrates. Forms part of the jaw domain. The chain is DNA-directed RNA polymerase subunit Rpo1C from Metallosphaera sedula (strain ATCC 51363 / DSM 5348 / JCM 9185 / NBRC 15509 / TH2).